Here is a 455-residue protein sequence, read N- to C-terminus: Kynurenine 3-monooxygenase (455 aa).

Belongs to the aromatic-ring hydroxylase family. KMO subfamily. FAD is required as a cofactor.

It catalyses the reaction L-kynurenine + NADPH + O2 + H(+) = 3-hydroxy-L-kynurenine + NADP(+) + H2O. It participates in cofactor biosynthesis; NAD(+) biosynthesis; quinolinate from L-kynurenine: step 1/3. Catalyzes the hydroxylation of L-kynurenine (L-Kyn) to form 3-hydroxy-L-kynurenine (L-3OHKyn). Required for synthesis of quinolinic acid. This Xanthomonas oryzae pv. oryzae (strain PXO99A) protein is Kynurenine 3-monooxygenase.